Consider the following 154-residue polypeptide: Nascent polypeptide-associated complex subunit beta (154 aa).

In terms of domain architecture, NAC-A/B spans 33-98 (EQDDTKLIEA…PQEKNVTQLI (66 aa)). Positions 125-154 (APTELNAGAPAGGDEGIPDLIDGEKFDEVE) are disordered.

This sequence belongs to the NAC-beta family. As to quaternary structure, part of the nascent polypeptide-associated complex (NAC), consisting of EGD2 and EGD1. NAC associates with ribosomes via EGD1.

Its subcellular location is the cytoplasm. It is found in the nucleus. Its function is as follows. Component of the nascent polypeptide-associated complex (NAC), a dynamic component of the ribosomal exit tunnel, protecting the emerging polypeptides from interaction with other cytoplasmic proteins to ensure appropriate nascent protein targeting. The NAC complex also promotes mitochondrial protein import by enhancing productive ribosome interactions with the outer mitochondrial membrane and blocks the inappropriate interaction of ribosomes translating non-secretory nascent polypeptides with translocation sites in the membrane of the endoplasmic reticulum. EGD1 may act as a transcription factor that exert a negative effect on the expression of several genes that are transcribed by RNA polymerase II. The chain is Nascent polypeptide-associated complex subunit beta (EGD1) from Scheffersomyces stipitis (strain ATCC 58785 / CBS 6054 / NBRC 10063 / NRRL Y-11545) (Yeast).